The chain runs to 263 residues: Tryptophan synthase alpha chain (263 aa).

Active-site proton acceptor residues include Glu-46 and Asp-57.

It belongs to the TrpA family. In terms of assembly, tetramer of two alpha and two beta chains.

The enzyme catalyses (1S,2R)-1-C-(indol-3-yl)glycerol 3-phosphate + L-serine = D-glyceraldehyde 3-phosphate + L-tryptophan + H2O. It functions in the pathway amino-acid biosynthesis; L-tryptophan biosynthesis; L-tryptophan from chorismate: step 5/5. The alpha subunit is responsible for the aldol cleavage of indoleglycerol phosphate to indole and glyceraldehyde 3-phosphate. The protein is Tryptophan synthase alpha chain of Bacteroides fragilis (strain ATCC 25285 / DSM 2151 / CCUG 4856 / JCM 11019 / LMG 10263 / NCTC 9343 / Onslow / VPI 2553 / EN-2).